A 388-amino-acid chain; its full sequence is Succinate--CoA ligase [ADP-forming] subunit beta (388 aa).

The ATP-grasp domain occupies 9 to 244 (KQLFKEYGLP…PSQEDAREAH (236 aa)). Residues K46, 53-55 (GRG), E99, T102, and E107 each bind ATP. Positions 199 and 213 each coordinate Mg(2+). Substrate contacts are provided by residues N264 and 321-323 (GIV).

It belongs to the succinate/malate CoA ligase beta subunit family. Heterotetramer of two alpha and two beta subunits. It depends on Mg(2+) as a cofactor.

The enzyme catalyses succinate + ATP + CoA = succinyl-CoA + ADP + phosphate. It catalyses the reaction GTP + succinate + CoA = succinyl-CoA + GDP + phosphate. Its pathway is carbohydrate metabolism; tricarboxylic acid cycle; succinate from succinyl-CoA (ligase route): step 1/1. Succinyl-CoA synthetase functions in the citric acid cycle (TCA), coupling the hydrolysis of succinyl-CoA to the synthesis of either ATP or GTP and thus represents the only step of substrate-level phosphorylation in the TCA. The beta subunit provides nucleotide specificity of the enzyme and binds the substrate succinate, while the binding sites for coenzyme A and phosphate are found in the alpha subunit. The sequence is that of Succinate--CoA ligase [ADP-forming] subunit beta from Alteromonas mediterranea (strain DSM 17117 / CIP 110805 / LMG 28347 / Deep ecotype).